Consider the following 289-residue polypeptide: Acetyl-coenzyme A carboxylase carboxyl transferase subunit beta (289 aa).

The region spanning 28 to 289 (VMTKCPKCKK…QGEGMAVWQN (262 aa)) is the CoA carboxyltransferase N-terminal domain. 4 residues coordinate Zn(2+): Cys-32, Cys-35, Cys-51, and Cys-54. The C4-type zinc finger occupies 32–54 (CPKCKKIMYTKELLKNLKVCVNC).

The protein belongs to the AccD/PCCB family. Acetyl-CoA carboxylase is a heterohexamer composed of biotin carboxyl carrier protein (AccB), biotin carboxylase (AccC) and two subunits each of ACCase subunit alpha (AccA) and ACCase subunit beta (AccD). Zn(2+) is required as a cofactor.

It localises to the cytoplasm. It catalyses the reaction N(6)-carboxybiotinyl-L-lysyl-[protein] + acetyl-CoA = N(6)-biotinyl-L-lysyl-[protein] + malonyl-CoA. It participates in lipid metabolism; malonyl-CoA biosynthesis; malonyl-CoA from acetyl-CoA: step 1/1. Component of the acetyl coenzyme A carboxylase (ACC) complex. Biotin carboxylase (BC) catalyzes the carboxylation of biotin on its carrier protein (BCCP) and then the CO(2) group is transferred by the transcarboxylase to acetyl-CoA to form malonyl-CoA. The polypeptide is Acetyl-coenzyme A carboxylase carboxyl transferase subunit beta (Bacillus cytotoxicus (strain DSM 22905 / CIP 110041 / 391-98 / NVH 391-98)).